Consider the following 217-residue polypeptide: Probable transaldolase (217 aa).

Lys84 serves as the catalytic Schiff-base intermediate with substrate.

Belongs to the transaldolase family. Type 3B subfamily.

Its subcellular location is the cytoplasm. The catalysed reaction is D-sedoheptulose 7-phosphate + D-glyceraldehyde 3-phosphate = D-erythrose 4-phosphate + beta-D-fructose 6-phosphate. It functions in the pathway carbohydrate degradation; pentose phosphate pathway; D-glyceraldehyde 3-phosphate and beta-D-fructose 6-phosphate from D-ribose 5-phosphate and D-xylulose 5-phosphate (non-oxidative stage): step 2/3. Functionally, transaldolase is important for the balance of metabolites in the pentose-phosphate pathway. This Roseiflexus castenholzii (strain DSM 13941 / HLO8) protein is Probable transaldolase.